Here is a 153-residue protein sequence, read N- to C-terminus: Partner of bursicon (153 aa).

An N-terminal signal peptide occupies residues 1 to 35 (MCNSVRTALAASNCCSIVLCCVLLLTLTLTVAVTA). 5 disulfides stabilise this stretch: Cys-44–Cys-102, Cys-68–Cys-117, Cys-77–Cys-143, Cys-81–Cys-145, and Cys-99–Cys-148. Positions 44-139 (CETLPSEIHL…SATMEIRLKE (96 aa)) constitute a CTCK domain.

As to quaternary structure, heterodimer of burs and pburs.

The protein resides in the secreted. Functionally, final heterodimeric neurohormone released at the end of the molting cycle, involved in the sclerotization (tanning) of the insect cuticle, melanization and wing spreading. The sequence is that of Partner of bursicon from Anopheles gambiae (African malaria mosquito).